Consider the following 214-residue polypeptide: Adenylate kinase (214 aa).

ATP is bound at residue 10-15 (GAGKGT). The segment at 30-59 (STGDMLRAAIKAGTELGKQAKAVIDAGQLV) is NMP. Residues Thr31, Arg36, 57-59 (QLV), 85-88 (GFPR), and Gln92 contribute to the AMP site. The tract at residues 122 to 159 (GRRAHLPSGRTYHVVYNPPKVEGKDDVTGEDLVVRDDD) is LID. Residues Arg123 and 132–133 (TY) each bind ATP. Positions 156 and 167 each coordinate AMP. Residue Lys200 participates in ATP binding.

It belongs to the adenylate kinase family. Monomer.

The protein resides in the cytoplasm. The enzyme catalyses AMP + ATP = 2 ADP. Its pathway is purine metabolism; AMP biosynthesis via salvage pathway; AMP from ADP: step 1/1. Its function is as follows. Catalyzes the reversible transfer of the terminal phosphate group between ATP and AMP. Plays an important role in cellular energy homeostasis and in adenine nucleotide metabolism. The sequence is that of Adenylate kinase from Vibrio parahaemolyticus serotype O3:K6 (strain RIMD 2210633).